Here is a 386-residue protein sequence, read N- to C-terminus: Succinate--CoA ligase [ADP-forming] subunit beta (386 aa).

Residues 9–244 (KELLRSYGVP…ETEEDPREVE (236 aa)) enclose the ATP-grasp domain. ATP contacts are provided by residues K46, 53–55 (GRG), E99, C102, and E107. 2 residues coordinate Mg(2+): N199 and D213. Substrate is bound by residues N264 and 321–323 (GIM).

The protein belongs to the succinate/malate CoA ligase beta subunit family. In terms of assembly, heterotetramer of two alpha and two beta subunits. Mg(2+) is required as a cofactor.

The catalysed reaction is succinate + ATP + CoA = succinyl-CoA + ADP + phosphate. It catalyses the reaction GTP + succinate + CoA = succinyl-CoA + GDP + phosphate. The protein operates within carbohydrate metabolism; tricarboxylic acid cycle; succinate from succinyl-CoA (ligase route): step 1/1. Its function is as follows. Succinyl-CoA synthetase functions in the citric acid cycle (TCA), coupling the hydrolysis of succinyl-CoA to the synthesis of either ATP or GTP and thus represents the only step of substrate-level phosphorylation in the TCA. The beta subunit provides nucleotide specificity of the enzyme and binds the substrate succinate, while the binding sites for coenzyme A and phosphate are found in the alpha subunit. In Exiguobacterium sibiricum (strain DSM 17290 / CCUG 55495 / CIP 109462 / JCM 13490 / 255-15), this protein is Succinate--CoA ligase [ADP-forming] subunit beta.